Consider the following 142-residue polypeptide: Large ribosomal subunit protein uL13 (142 aa).

This sequence belongs to the universal ribosomal protein uL13 family. In terms of assembly, part of the 50S ribosomal subunit.

Its function is as follows. This protein is one of the early assembly proteins of the 50S ribosomal subunit, although it is not seen to bind rRNA by itself. It is important during the early stages of 50S assembly. The polypeptide is Large ribosomal subunit protein uL13 (Histophilus somni (strain 129Pt) (Haemophilus somnus)).